The chain runs to 183 residues: NADH-ubiquinone oxidoreductase chain 5 (183 aa).

A run of 4 helical transmembrane segments spans residues 7–27, 30–50, 111–131, and 144–164; these read FMCY…GDNS, LFLG…FWFT, AITL…AQIG, and TPVS…FMIA.

This sequence belongs to the complex I subunit 5 family.

It localises to the mitochondrion inner membrane. It carries out the reaction a ubiquinone + NADH + 5 H(+)(in) = a ubiquinol + NAD(+) + 4 H(+)(out). Core subunit of the mitochondrial membrane respiratory chain NADH dehydrogenase (Complex I) that is believed to belong to the minimal assembly required for catalysis. Complex I functions in the transfer of electrons from NADH to the respiratory chain. The immediate electron acceptor for the enzyme is believed to be ubiquinone. The polypeptide is NADH-ubiquinone oxidoreductase chain 5 (NDH5) (Pisum sativum (Garden pea)).